The sequence spans 447 residues: ATP-dependent protease ATPase subunit HslU (447 aa).

ATP is bound by residues isoleucine 18, 60–65 (GVGKTE), aspartate 259, glutamate 325, and arginine 397.

This sequence belongs to the ClpX chaperone family. HslU subfamily. A double ring-shaped homohexamer of HslV is capped on each side by a ring-shaped HslU homohexamer. The assembly of the HslU/HslV complex is dependent on binding of ATP.

Its subcellular location is the cytoplasm. Its function is as follows. ATPase subunit of a proteasome-like degradation complex; this subunit has chaperone activity. The binding of ATP and its subsequent hydrolysis by HslU are essential for unfolding of protein substrates subsequently hydrolyzed by HslV. HslU recognizes the N-terminal part of its protein substrates and unfolds these before they are guided to HslV for hydrolysis. This chain is ATP-dependent protease ATPase subunit HslU, found in Burkholderia pseudomallei (strain 668).